Reading from the N-terminus, the 247-residue chain is Probable transcriptional regulatory protein MS0710 (247 aa).

Belongs to the TACO1 family.

It localises to the cytoplasm. The polypeptide is Probable transcriptional regulatory protein MS0710 (Mannheimia succiniciproducens (strain KCTC 0769BP / MBEL55E)).